A 734-amino-acid chain; its full sequence is E3 ubiquitin-protein ligase TRIM56 (734 aa).

The RING-type zinc-finger motif lies at 21–60; that stretch reads CKICLEQLHTPKTLPCLHTYCQDCLAQLDIGGQVRCPECR. 2 consecutive B box-type zinc fingers follow at residues 98 to 149 and 164 to 205; these read KPTC…VVDL and RQAS…CLPL. The Zn(2+) site is built by cysteine 169, histidine 172, cysteine 192, and histidine 197. Positions 215–303 form a coiled coil; that stretch reads GLEELLAGVD…KIERQEQVAK (89 aa). A compositionally biased stretch (basic and acidic residues) spans 372 to 381; sequence EPKQSPKDSG. The disordered stretch occupies residues 372 to 463; sequence EPKQSPKDSG…SPILRPNLEG (92 aa). The segment covering 435 to 448 has biased composition (basic residues); that stretch reads RPNKKKKCKGRGKS. Serine 454 carries the phosphoserine modification.

It belongs to the TRIM/RBCC family. As to quaternary structure, interacts with STING1. Interacts with TICAM1.

The protein resides in the cytoplasm. It catalyses the reaction S-ubiquitinyl-[E2 ubiquitin-conjugating enzyme]-L-cysteine + [acceptor protein]-L-lysine = [E2 ubiquitin-conjugating enzyme]-L-cysteine + N(6)-ubiquitinyl-[acceptor protein]-L-lysine.. Its pathway is protein modification; protein ubiquitination. Functionally, E3 ubiquitin-protein ligase that plays a key role in innate antiviral immunity by mediating ubiquitination of CGAS and STING1. In response to pathogen- and host-derived double-stranded DNA (dsDNA), targets STING1 to 'Lys-63'-linked ubiquitination, thereby promoting its homodimerization, a step required for the production of type I interferon IFN-beta. Also mediates monoubiquitination of CGAS, thereby promoting CGAS oligomerization and subsequent activation. Independently of its E3 ubiquitin ligase activity, positive regulator of TLR3 signaling. Potentiates extracellular double stranded RNA (dsRNA)-induced expression of IFNB1 and interferon-stimulated genes ISG15, IFIT1/ISG56, CXCL10, OASL and CCL5/RANTES. This Mus musculus (Mouse) protein is E3 ubiquitin-protein ligase TRIM56.